Consider the following 415-residue polypeptide: Gamma-glutamyl phosphate reductase (415 aa).

This sequence belongs to the gamma-glutamyl phosphate reductase family.

It localises to the cytoplasm. The catalysed reaction is L-glutamate 5-semialdehyde + phosphate + NADP(+) = L-glutamyl 5-phosphate + NADPH + H(+). It participates in amino-acid biosynthesis; L-proline biosynthesis; L-glutamate 5-semialdehyde from L-glutamate: step 2/2. Functionally, catalyzes the NADPH-dependent reduction of L-glutamate 5-phosphate into L-glutamate 5-semialdehyde and phosphate. The product spontaneously undergoes cyclization to form 1-pyrroline-5-carboxylate. In Shouchella clausii (strain KSM-K16) (Alkalihalobacillus clausii), this protein is Gamma-glutamyl phosphate reductase.